The chain runs to 292 residues: Phosphatidylserine decarboxylase proenzyme (292 aa).

Active-site charge relay system; for autoendoproteolytic cleavage activity residues include Asp89, His146, and Ser252. Residue Ser252 is the Schiff-base intermediate with substrate; via pyruvic acid; for decarboxylase activity of the active site. At Ser252 the chain carries Pyruvic acid (Ser); by autocatalysis.

Belongs to the phosphatidylserine decarboxylase family. PSD-B subfamily. Prokaryotic type I sub-subfamily. Heterodimer of a large membrane-associated beta subunit and a small pyruvoyl-containing alpha subunit. It depends on pyruvate as a cofactor. Is synthesized initially as an inactive proenzyme. Formation of the active enzyme involves a self-maturation process in which the active site pyruvoyl group is generated from an internal serine residue via an autocatalytic post-translational modification. Two non-identical subunits are generated from the proenzyme in this reaction, and the pyruvate is formed at the N-terminus of the alpha chain, which is derived from the carboxyl end of the proenzyme. The autoendoproteolytic cleavage occurs by a canonical serine protease mechanism, in which the side chain hydroxyl group of the serine supplies its oxygen atom to form the C-terminus of the beta chain, while the remainder of the serine residue undergoes an oxidative deamination to produce ammonia and the pyruvoyl prosthetic group on the alpha chain. During this reaction, the Ser that is part of the protease active site of the proenzyme becomes the pyruvoyl prosthetic group, which constitutes an essential element of the active site of the mature decarboxylase.

It is found in the cell membrane. It catalyses the reaction a 1,2-diacyl-sn-glycero-3-phospho-L-serine + H(+) = a 1,2-diacyl-sn-glycero-3-phosphoethanolamine + CO2. It functions in the pathway phospholipid metabolism; phosphatidylethanolamine biosynthesis; phosphatidylethanolamine from CDP-diacylglycerol: step 2/2. Catalyzes the formation of phosphatidylethanolamine (PtdEtn) from phosphatidylserine (PtdSer). This chain is Phosphatidylserine decarboxylase proenzyme, found in Shewanella sp. (strain MR-7).